The sequence spans 419 residues: UDP-N-acetylglucosamine 1-carboxyvinyltransferase (419 aa).

22–23 lines the phosphoenolpyruvate pocket; the sequence is KN. Arg-92 lines the UDP-N-acetyl-alpha-D-glucosamine pocket. The active-site Proton donor is the Cys-116. Cys-116 carries the post-translational modification 2-(S-cysteinyl)pyruvic acid O-phosphothioketal. UDP-N-acetyl-alpha-D-glucosamine is bound by residues 121 to 125, Asp-306, and Ile-328; that span reads RPIDL.

Belongs to the EPSP synthase family. MurA subfamily.

The protein resides in the cytoplasm. The enzyme catalyses phosphoenolpyruvate + UDP-N-acetyl-alpha-D-glucosamine = UDP-N-acetyl-3-O-(1-carboxyvinyl)-alpha-D-glucosamine + phosphate. Its pathway is cell wall biogenesis; peptidoglycan biosynthesis. Cell wall formation. Adds enolpyruvyl to UDP-N-acetylglucosamine. Target for the antibiotic fosfomycin. This is UDP-N-acetylglucosamine 1-carboxyvinyltransferase from Streptococcus pneumoniae (strain Hungary19A-6).